The primary structure comprises 495 residues: Dipeptide and tripeptide permease B (495 aa).

Topologically, residues 1–16 (MDNKVSILNQPKPFKM) are cytoplasmic. A helical transmembrane segment spans residues 17-37 (IFFIELWERFGYYGLQGILAV). The Periplasmic portion of the chain corresponds to 38-50 (YFVDKLGFSMQDS). Residues 51-71 (FVTFGAFAALVYGLVSVGGYV) form a helical membrane-spanning segment. The Cytoplasmic segment spans residues 72–80 (GDYVLGTKR). The chain crosses the membrane as a helical span at residues 81 to 101 (TMVFGAVVLALGYFLMGFSIL). Over 102–104 (NPN) the chain is Periplasmic. A helical membrane pass occupies residues 105–125 (FIYVALGAIAVGNGLFKANPS). Topologically, residues 126-144 (SLLAKCYEKGDSRLDGAFT) are cytoplasmic. The helical transmembrane segment at 145-165 (LYYMSINIGSLVSLSISPVIA) threads the bilayer. The Periplasmic portion of the chain corresponds to 166–170 (NNYGY). A helical membrane pass occupies residues 171–191 (EYAFIICGLGLIASLFSYFSL). Topologically, residues 192-209 (RSTVQGIGSEPDALPLNK) are cytoplasmic. A helical membrane pass occupies residues 210–230 (TKALIVLIGTIASTLVCAWLL). Gln-231 is a topological domain (periplasmic). Residues 232 to 252 (NIMMANLALGLIGVGVVGFFL) form a helical membrane-spanning segment. At 253 to 265 (KETFKEVGEQRNK) the chain is on the cytoplasmic side. A helical transmembrane segment spans residues 266 to 286 (MIVAFILMLQAIIFYVLYAQM). The Periplasmic portion of the chain corresponds to 287 to 309 (PTSLNFFAINNVHSELFGMDINP). A helical membrane pass occupies residues 310-330 (VSLQALNPFWVIFCSPILAYL). Over 331–348 (YTYYGNQNKDLSMPGKFT) the chain is Cytoplasmic. The chain crosses the membrane as a helical span at residues 349-369 (VGMFMCAFGFLSVAAAGNWFA). Over 370–373 (DQAG) the chain is Periplasmic. A helical membrane pass occupies residues 374–394 (MVSVWWMVLVYLFQSLGELMI). The Cytoplasmic segment spans residues 395-409 (SGLGLAMVASLVPQR). A helical transmembrane segment spans residues 410-430 (LMGFTMGAWFLTQAASFIIGG). The Periplasmic segment spans residues 431 to 454 (YVATFSATPEHLTDPLDTLPVYTE). A helical transmembrane segment spans residues 455–475 (LFQNIGFVTLAVAIVMAITAP). Topologically, residues 476-495 (KLNKMMTSSQPEDAELVEQP) are cytoplasmic.

This sequence belongs to the major facilitator superfamily. Proton-dependent oligopeptide transporter (POT/PTR) (TC 2.A.17) family. DtpB subfamily.

It localises to the cell inner membrane. Proton-dependent permease that transports di- and tripeptides. The protein is Dipeptide and tripeptide permease B of Aliivibrio fischeri (strain MJ11) (Vibrio fischeri).